Reading from the N-terminus, the 580-residue chain is Purine permease (580 aa).

A run of 12 helical transmembrane segments spans residues 68–88, 107–127, 136–156, 184–204, 211–231, 263–283, 294–314, 385–405, 426–446, 447–467, 481–501, and 522–542; these read PLVLALLLGLQHALAMLAGVI, SQYLVSTSLIVSGLLSAVQMF, YYVGTGLVSVVGTSFATITVA, YGALLATSCLCSLLEIGLSFM, ALFPPIVTGPTVFLIGASLIG, LPWGSAEFIGLGFLVFATIIL, SCAVIVGLLVGCIVAAACGYF, LGNGITCLLAGLCTITPMSVF, CCFFLVVMGIFAKFAAALVAI, PSSVLGGMTTFLFSSVAISGV, FILTASFAVGMAATLVPDWFS, and LVMANGFAVTGFLGLLLNLIL.

It belongs to the nucleobase:cation symporter-2 (NCS2) (TC 2.A.40) family.

The protein resides in the membrane. Functionally, able to transport with low efficiency all natural purines as well as purine analogs. This Emericella nidulans (strain FGSC A4 / ATCC 38163 / CBS 112.46 / NRRL 194 / M139) (Aspergillus nidulans) protein is Purine permease (uapC).